The chain runs to 130 residues: Cholecystokinin (130 aa).

The signal sequence occupies residues 1–20; that stretch reads MYSGICIYMFLAMLSTSSSG. Positions 21–60 are excised as a propeptide; it reads QQATGSHNENPVATELEQSLTEHHRHVRVPSSAGQLKPIQ. Tyr-112 is subject to Sulfotyrosine. The residue at position 118 (Phe-118) is a Phenylalanine amide. The propeptide occupies 122 to 130; sequence SAEEYEYSS. 2 positions are modified to sulfotyrosine: Tyr-126 and Tyr-128.

Belongs to the gastrin/cholecystokinin family. The precursor is cleaved by proteases to produce a number of active cholecystokinins. Expressed in brain, duodenum and small intestine.

It is found in the secreted. Functionally, this peptide hormone induces gall bladder contraction and the release of pancreatic enzymes in the gut. Its function in the brain is not clear. In Trachemys scripta (Red-eared slider turtle), this protein is Cholecystokinin.